Reading from the N-terminus, the 255-residue chain is Aliphatic sulfonates import ATP-binding protein SsuB (255 aa).

Residues 12-233 (LLLNAVSKHY…RLGSVRLAEL (222 aa)) form the ABC transporter domain. 44 to 51 (GRSGGGKS) contributes to the ATP binding site.

Belongs to the ABC transporter superfamily. Aliphatic sulfonates importer (TC 3.A.1.17.2) family. The complex is composed of two ATP-binding proteins (SsuB), two transmembrane proteins (SsuC) and a solute-binding protein (SsuA).

It localises to the cell inner membrane. It catalyses the reaction ATP + H2O + aliphatic sulfonate-[sulfonate-binding protein]Side 1 = ADP + phosphate + aliphatic sulfonateSide 2 + [sulfonate-binding protein]Side 1.. Part of the ABC transporter complex SsuABC involved in aliphatic sulfonates import. Responsible for energy coupling to the transport system. The protein is Aliphatic sulfonates import ATP-binding protein SsuB of Shigella flexneri.